The sequence spans 1122 residues: Breast carcinoma-amplified sequence 3 homolog (1122 aa).

Residues 1–41 form a disordered region; that stretch reads MSADSPRRHPSGVVGSGIGLGSGSGTGLGSGSTGGSKSGAA. Residues 14–37 are compositionally biased toward gly residues; it reads VGSGIGLGSGSGTGLGSGSTGGSK. Serine 55 carries the post-translational modification Phosphoserine. Low complexity-rich tracts occupy residues 357 to 377, 626 to 641, 966 to 987, and 1036 to 1051; these read GTTAGSGASSKSSSFDSASGG, GSNSQRQRQRLSSLSD, TKDNASPNPNTNTNPNAIPSSN, and LSLEGPPSQSSPPLSL. Disordered regions lie at residues 357 to 382, 620 to 644, 966 to 990, 1033 to 1054, and 1071 to 1122; these read GTTAGSGASSKSSSFDSASGGPDAKQ, GVGVGVGSNSQRQRQRLSSLSDDSG, TKDNASPNPNTNTNPNAIPSSNKVQ, NSRLSLEGPPSQSSPPLSLTNG, and GVAQ…RRNL. Position 638 is a phosphoserine (serine 638). Residues 1087–1112 show a composition bias toward acidic residues; that stretch reads VDDDDEEEEEEEEELDEEAEPDDDER. A compositionally biased stretch (basic and acidic residues) spans 1113-1122; the sequence is EDRPLGRRNL.

Belongs to the BCAS3 family. In terms of tissue distribution, expressed in all postembryonic pericardial cells, but not in cardioblasts. Also expressed in Garland cells in third instar larvae (at protein level).

Its subcellular location is the cytoplasm. Its function is as follows. Regulates macropinocytosis in pericardial cells. The chain is Breast carcinoma-amplified sequence 3 homolog (rudhira) from Drosophila melanogaster (Fruit fly).